The chain runs to 69 residues: Conotoxin Eb6.22 (69 aa).

The first 17 residues, V1–A17, serve as a signal peptide directing secretion. A propeptide spanning residues E18–R41 is cleaved from the precursor. Intrachain disulfides connect C43/C57, C50/C61, and C56/C68.

It belongs to the conotoxin O1 superfamily. As to expression, expressed by the venom duct.

Its subcellular location is the secreted. The polypeptide is Conotoxin Eb6.22 (E1) (Conus ebraeus (Hebrew cone)).